We begin with the raw amino-acid sequence, 1659 residues long: eIF-2-alpha kinase GCN2 (1659 aa).

The RWD domain occupies 17–128 (NELEAIRSIY…SFTQEKLDEF (112 aa)). The segment at 149-170 (KEQLEKEEREKQQETIKKRSDE) is disordered. 2 consecutive Protein kinase domains span residues 256–527 (LVKP…MKFL) and 599–981 (FEEI…SGWL). Residues 605–613 (LGQGAFGQV) and K628 contribute to the ATP site. Disordered regions lie at residues 671–691 (NVFE…DFEE) and 727–768 (FENS…VPRR). S761 carries the post-translational modification Phosphoserine. D835 functions as the Proton acceptor in the catalytic mechanism. A phosphothreonine; by autocatalysis mark is found at T882 and T887. A histidyl-tRNA synthetase-like region spans residues 999–1519 (NPSSPWQQQV…EFKRWDENSS (521 aa)).

Belongs to the protein kinase superfamily. Ser/Thr protein kinase family. GCN2 subfamily. In terms of assembly, homodimer; homodimerization is important for kinase activation by uncharged tRNAs. Interacts (via N-terminal RWD domain) with GCN1 (via N- and C-terminus); this interaction stimulates GCN2 kinase activity in a GCN20-dependent manner in response to amino acid starvation. Interacts (via N-terminus) with the GCN1-GCN20 complex on translating ribosomes in amino acid-starved cells; GCN1 may bind near the ribosomal A-site and promotes the transfer of uncharged tRNAs from the A-site to the tRNA-binding domain in GCN2 for its subsequent kinase activation, and hence allowing GCN4 translational activation and derepression of amino acid biosynthetic genes. Interacts (via C-terminus) with TIF11; this interaction is direct, occurs in amino acid-repleted cells, may be stabilized in a ribosome-dependent manner, reduces GCN2-mediated eIF-2-alpha phosphorylation but not GCN2 autophosphorylation and is lost in amino acid-starved cells and by uncharged tRNAs. Associates (via C-terminus) with ribosomes. The cofactor is Mg(2+). Post-translationally, autophosphorylated, autophosphorylation on Thr-882 and Thr-887 increases kinase activity.

It localises to the cytoplasm. It catalyses the reaction L-seryl-[protein] + ATP = O-phospho-L-seryl-[protein] + ADP + H(+). The enzyme catalyses L-threonyl-[protein] + ATP = O-phospho-L-threonyl-[protein] + ADP + H(+). Its activity is regulated as follows. The integrated stress response (ISR) is activated in response to conditions that promote ribosome collisions: GCN1, which acts as a ribosome collision sensor, activates GCN2. The RQC pathway and the integrated stress response (ISR) antagonize each other: HEL2 prevents the activation of GCN2, while GCN2 suppresses RQC activation. Ribosome stalling-induced integrated stress response prefers ribosomes with empty A sites. The kinase activity is stimulated upon binding to uncharged tRNAs. In terms of biological role, metabolic-stress sensing protein kinase that phosphorylates the alpha subunit of eukaryotic translation initiation factor 2 (eIF-2-alpha/SUI2) on 'Ser-52' in response to low amino acid, carbon, or purine availability. Required for adapatation to nutrient starvation by acting as a key component of the integrated stress response (ISR), by which cells alter their translational and transcriptional output in response to starvation. Converts phosphorylated eIF-2-alpha/SUI2 either to a competitive inhibitor of translation initiation factor eIF-2B, leading to a global protein synthesis repression, and thus to a reduced overall utilization of amino acids, or to a translational initiation activation of specific mRNAs, such as the transcriptional activator GCN4, and hence allowing GCN4-mediated reprogramming of transcription to alleviate nutrient depletion. Binds uncharged tRNAs. Binds to aminoacylated tRNA(Phe) less tightly than to deacylated tRNA(Phe). Binds to double-stranded RNA. The sequence is that of eIF-2-alpha kinase GCN2 from Saccharomyces cerevisiae (strain ATCC 204508 / S288c) (Baker's yeast).